We begin with the raw amino-acid sequence, 232 residues long: UPF0235 protein At5g63440 (232 aa).

It belongs to the UPF0235 family. In terms of assembly, interacts with CTN.

It is found in the nucleus speckle. May play a role during early embryonic development. Probably involved in pre-mRNA splicing. The protein is UPF0235 protein At5g63440 of Arabidopsis thaliana (Mouse-ear cress).